Reading from the N-terminus, the 505-residue chain is 4-trimethylaminobutyraldehyde dehydrogenase (505 aa).

NAD(+)-binding positions include Lys191 and 243 to 247; that span reads GSVPT. Glu265 (proton acceptor) is an active-site residue. The Nucleophile role is filled by Cys299. Glu402 is a binding site for NAD(+).

It belongs to the aldehyde dehydrogenase family. As to quaternary structure, homotetramer. In terms of tissue distribution, constitutively expressed in all organs tested: brain, eye, gill, GI, heart, liver, kidney, muscle, skin, testis and ovary.

The protein localises to the cytoplasm. It is found in the cytosol. It carries out the reaction 4-(trimethylamino)butanal + NAD(+) + H2O = 4-(trimethylamino)butanoate + NADH + 2 H(+). The catalysed reaction is an aldehyde + NAD(+) + H2O = a carboxylate + NADH + 2 H(+). It functions in the pathway amine and polyamine biosynthesis; carnitine biosynthesis. Its function is as follows. Converts gamma-trimethylaminobutyraldehyde into gamma-butyrobetaine with high efficiency (in vitro). Can catalyze the irreversible oxidation of a broad range of aldehydes to the corresponding acids in an NAD-dependent reaction, but with low efficiency. The protein is 4-trimethylaminobutyraldehyde dehydrogenase (aldh9A1) of Oryzias latipes (Japanese rice fish).